A 360-amino-acid polypeptide reads, in one-letter code: Phospho-N-acetylmuramoyl-pentapeptide-transferase (360 aa).

Transmembrane regions (helical) follow at residues R25 to I45, T73 to L93, Y97 to Y117, W132 to A152, V168 to S188, G199 to S219, A236 to F256, V263 to I283, I288 to V308, and V338 to K358.

This sequence belongs to the glycosyltransferase 4 family. MraY subfamily. The cofactor is Mg(2+).

Its subcellular location is the cell inner membrane. The enzyme catalyses UDP-N-acetyl-alpha-D-muramoyl-L-alanyl-gamma-D-glutamyl-meso-2,6-diaminopimeloyl-D-alanyl-D-alanine + di-trans,octa-cis-undecaprenyl phosphate = di-trans,octa-cis-undecaprenyl diphospho-N-acetyl-alpha-D-muramoyl-L-alanyl-D-glutamyl-meso-2,6-diaminopimeloyl-D-alanyl-D-alanine + UMP. It participates in cell wall biogenesis; peptidoglycan biosynthesis. In terms of biological role, catalyzes the initial step of the lipid cycle reactions in the biosynthesis of the cell wall peptidoglycan: transfers peptidoglycan precursor phospho-MurNAc-pentapeptide from UDP-MurNAc-pentapeptide onto the lipid carrier undecaprenyl phosphate, yielding undecaprenyl-pyrophosphoryl-MurNAc-pentapeptide, known as lipid I. This Pseudomonas fluorescens (strain ATCC BAA-477 / NRRL B-23932 / Pf-5) protein is Phospho-N-acetylmuramoyl-pentapeptide-transferase.